Here is a 2548-residue protein sequence, read N- to C-terminus: Variant-silencing SET domain-containing protein (2548 aa).

Residues 37–48 (IDDDDDDDNDNN) show a composition bias toward acidic residues. Disordered stretches follow at residues 37–61 (IDDDDDDDNDNNEEPKEMNINKTNN), 336–379 (GDPK…DDDN), and 585–629 (SVDR…NTQT). Positions 336–357 (GDPKKRIERNKQEIEDHRREQD) are enriched in basic and acidic residues. Acidic residues predominate over residues 358–378 (GENDQEEDNYDDYDDEDDDDD). Residues 602 to 616 (NGSNNNNSSSNNNNN) show a composition bias toward low complexity. Over residues 617 to 629 (ITHITNDCDNTQT) the composition is skewed to polar residues. Residues 787–846 (FYLCEFCEQNIFDMNNMIKKDKAKECMYRCNISCGRTFHKACVCYIKNNDNYICFFCLYD) form a PHD-type 1 zinc finger. A compositionally biased stretch (basic residues) spans 929–944 (IKRRHIYRKRRRRGPR). Disordered stretches follow at residues 929–1054 (IKRR…CDEN), 1546–1575 (EKNTKNKLCNNDNNNNNNNKGKNTKYNTLD), 1713–1732 (EQGSINNAKHNEQGSINNAK), and 1772–1822 (INNA…DDHR). The span at 986–1016 (DNNDDNNDNNDDNNDNNDDNNDNNDNNDDNN) shows a compositional bias: acidic residues. Composition is skewed to low complexity over residues 1017–1050 (NDNNNNNNNDNNDNNNNNNNNNNNNDNDNNNNNN) and 1551–1572 (NKLCNNDNNNNNNNKGKNTKYN). A compositionally biased stretch (polar residues) spans 1714 to 1732 (QGSINNAKHNEQGSINNAK). Residues 2067–2117 (SDDYKCLCQGECNLYTCYNSLSNIQCSKSRCNLPEKIQDRKCFNRPFRKSF) enclose the AWS domain. Residues 2119–2240 (KDLEIKKTEK…SGEEITYNYS (122 aa)) enclose the SET domain. Tyr2239 is a binding site for S-adenosyl-L-methionine. The PHD-type 2 zinc finger occupies 2423 to 2471 (DEVCRKCKSCGNLTMCDKCFQSYHQLCGNMHSKMYKNNELVLCRFCQKY).

It belongs to the class V-like SAM-binding methyltransferase superfamily.

Its subcellular location is the nucleus. The protein localises to the chromosome. The enzyme catalyses L-lysyl(36)-[histone H3] + 3 S-adenosyl-L-methionine = N(6),N(6),N(6)-trimethyl-L-lysyl(36)-[histone H3] + 3 S-adenosyl-L-homocysteine + 3 H(+). Functionally, histone methyltransferase that specifically represses expression of the surface antigen-coding var genes by mediating trimethylation of 'Lys-36' of histone H3 (H3K36me3) on var genes. SETVS-dependent H3K36me3 is specifically involved in var genes silencing, a central step malaria pathogenesis: each parasite contains 60 distinct var genes that each code for a different PfEMP1 protein. During infection, the clonal parasite population expresses only 1 gene at a time, while the 59 other var genes are silenced. The parasite then switches to the expression of a new variant antigen as an immune-evasion mechanism to avoid the host antibody response. Represses expression of both var mRNA and antisense long non-coding RNA. The protein is Variant-silencing SET domain-containing protein (SETVS) of Plasmodium falciparum (isolate 3D7).